The following is a 141-amino-acid chain: Nucleoside diphosphate kinase (141 aa).

Residues Lys11, Phe59, Arg87, Thr93, Arg104, and Asn114 each contribute to the ATP site. His117 serves as the catalytic Pros-phosphohistidine intermediate.

The protein belongs to the NDK family. In terms of assembly, homotetramer. It depends on Mg(2+) as a cofactor.

Its subcellular location is the cytoplasm. The catalysed reaction is a 2'-deoxyribonucleoside 5'-diphosphate + ATP = a 2'-deoxyribonucleoside 5'-triphosphate + ADP. It catalyses the reaction a ribonucleoside 5'-diphosphate + ATP = a ribonucleoside 5'-triphosphate + ADP. In terms of biological role, major role in the synthesis of nucleoside triphosphates other than ATP. The ATP gamma phosphate is transferred to the NDP beta phosphate via a ping-pong mechanism, using a phosphorylated active-site intermediate. This Cupriavidus pinatubonensis (strain JMP 134 / LMG 1197) (Cupriavidus necator (strain JMP 134)) protein is Nucleoside diphosphate kinase.